Reading from the N-terminus, the 1325-residue chain is ATP-binding cassette sub-family C member 4 (1325 aa).

The 286-residue stretch at 92 to 377 (YLVLGIFTLI…FFPSAIERVS (286 aa)) folds into the ABC transmembrane type-1 1 domain. The next 7 helical transmembrane spans lie at 93 to 113 (LVLG…PIFL), 136 to 156 (AYAT…HLYF), 207 to 227 (QVTV…AVTA), 228 to 248 (LLWM…IILL), 328 to 348 (SKII…VITA), 351 to 371 (VFVA…FFPS), and 440 to 460 (LLAV…AVLG). Residues 410 to 633 (VHVQDFTAFW…GIDFGSLLKK (224 aa)) form the ABC transporter 1 domain. 445–452 (GPVGAGKS) provides a ligand contact to ATP. A phosphothreonine mark is found at threonine 646 and threonine 648. Residues 657–667 (SSVWSQQSSRP) show a composition bias toward low complexity. The tract at residues 657 to 688 (SSVWSQQSSRPSLKDGALESQDTENVPVTLSE) is disordered. 2 positions are modified to phosphoserine: serine 664 and serine 668. A helical membrane pass occupies residues 710-730 (HWIVFIFLILLNTAAQVAYVL). In terms of domain architecture, ABC transmembrane type-1 2 spans 714 to 1005 (FIFLILLNTA…CVRQSAEVEN (292 aa)). Asparagine 746 and asparagine 754 each carry an N-linked (GlcNAc...) asparagine glycan. 6 helical membrane-spanning segments follow: residues 771 to 791 (LTVA…YVLV), 836 to 856 (LPLT…VVSV), 858 to 878 (VAVI…FIFL), 954 to 974 (AICA…AKTL), 977 to 997 (GQVG…QWCV), and 1038 to 1058 (EGVI…PLVL). An ABC transporter 2 domain is found at 1041-1274 (IIFDNVNFMY…KESLFYKMVQ (234 aa)). 1075 to 1082 (GRTGAGKS) is an ATP binding site. Residues 1322-1325 (ETAL) carry the PDZ-binding motif.

Belongs to the ABC transporter superfamily. ABCC family. Conjugate transporter (TC 3.A.1.208) subfamily. As to quaternary structure, interacts (via PDZ-binding motif) with SNX27 (via PDZ domain); this interaction accelerates MRP4 internalization. Requires Mg(2+) as cofactor. N-glycosylated; leading to substrate-selective effects on its transport activity. In terms of tissue distribution, widely expressed, with particularly high levels in prostate, but is barely detectable in liver. sinusoidal membrane of hepatocytes.

The protein resides in the basolateral cell membrane. The protein localises to the apical cell membrane. The catalysed reaction is ATP + H2O + xenobioticSide 1 = ADP + phosphate + xenobioticSide 2.. The enzyme catalyses an S-substituted glutathione(in) + ATP + H2O = an S-substituted glutathione(out) + ADP + phosphate + H(+). It carries out the reaction 17beta-estradiol 17-O-(beta-D-glucuronate)(in) + ATP + H2O = 17beta-estradiol 17-O-(beta-D-glucuronate)(out) + ADP + phosphate + H(+). It catalyses the reaction dehydroepiandrosterone 3-sulfate(in) + ATP + H2O = dehydroepiandrosterone 3-sulfate(out) + ADP + phosphate + H(+). The catalysed reaction is leukotriene C4(in) + ATP + H2O = leukotriene C4(out) + ADP + phosphate + H(+). The enzyme catalyses leukotriene B4(in) + ATP + H2O = leukotriene B4(out) + ADP + phosphate + H(+). It carries out the reaction urate(in) + ATP + H2O = urate(out) + ADP + phosphate + H(+). It catalyses the reaction 3',5'-cyclic GMP(in) + ATP + H2O = 3',5'-cyclic GMP(out) + ADP + phosphate + H(+). The catalysed reaction is 3',5'-cyclic AMP(in) + ATP + H2O = 3',5'-cyclic AMP(out) + ADP + phosphate + H(+). The enzyme catalyses prostaglandin E2(in) + ATP + H2O = prostaglandin E2(out) + ADP + phosphate + H(+). It carries out the reaction prostaglandin E1(in) + ATP + H2O = prostaglandin E1(out) + ADP + phosphate + H(+). It catalyses the reaction glycodeoxycholate(in) + glutathione(in) + ATP + H2O = glycodeoxycholate(out) + glutathione(out) + ADP + phosphate + H(+). The catalysed reaction is cholate(in) + glutathione(in) + ATP + H2O = cholate(out) + glutathione(out) + ADP + phosphate + H(+). The enzyme catalyses glycocholate(in) + glutathione(in) + ATP + H2O = glycocholate(out) + glutathione(out) + ADP + phosphate + H(+). It carries out the reaction taurocholate(in) + glutathione(in) + ATP + H2O = taurocholate(out) + glutathione(out) + ADP + phosphate + H(+). It catalyses the reaction glycochenodeoxycholate(in) + glutathione(in) + ATP + H2O = glycochenodeoxycholate(out) + glutathione(out) + ADP + phosphate + H(+). The catalysed reaction is taurochenodeoxycholate(in) + glutathione(in) + ATP + H2O = taurochenodeoxycholate(out) + glutathione(out) + ADP + phosphate + H(+). The enzyme catalyses glycoursodeoxycholate(in) + glutathione(in) + ATP + H2O = glycoursodeoxycholate(out) + glutathione(out) + ADP + phosphate + H(+). It carries out the reaction tauroursodeoxycholate(in) + glutathione(in) + ATP + H2O = tauroursodeoxycholate(out) + glutathione(out) + ADP + phosphate + H(+). GSH stimulates the transport of MRP4. Urate inhibits methotrexate transport but stimulates cGMP transport. Nonsteroidal anti-inflammatory drugs (NSAIDs) strongly suppress the transport of MRP4 substrates. In terms of biological role, ATP-dependent transporter of the ATP-binding cassette (ABC) family that actively extrudes physiological compounds and xenobiotics from cells. Transports a range of endogenous molecules that have a key role in cellular communication and signaling, including cyclic nucleotides such as cyclic AMP (cAMP) and cyclic GMP (cGMP), bile acids, steroid conjugates, urate, and prostaglandins. Mediates the ATP-dependent efflux of glutathione conjugates such as leukotriene C4 (LTC4) and leukotriene B4 (LTB4) too. The presence of GSH is necessary for the ATP-dependent transport of LTB4, whereas GSH is not required for the transport of LTC4. Mediates the cotransport of bile acids with reduced glutathione (GSH). Transports a wide range of drugs and their metabolites, including anticancer, antiviral and antibiotics molecules. Confers resistance to anticancer agents such as methotrexate. This is ATP-binding cassette sub-family C member 4 (ABCC4) from Homo sapiens (Human).